Here is a 261-residue protein sequence, read N- to C-terminus: Glutathione S-transferase theta-1 (261 aa).

One can recognise a GST N-terminal domain in the interval glycine 2–aspartate 101. Glutathione contacts are provided by residues lysine 72–valine 73 and glutamate 85–cysteine 86. A GST C-terminal domain is found at aspartate 107–leucine 248.

Belongs to the GST superfamily. Theta family. Homodimer.

It localises to the cytoplasm. The enzyme catalyses RX + glutathione = an S-substituted glutathione + a halide anion + H(+). Conjugation of reduced glutathione to a wide number of exogenous and endogenous hydrophobic electrophiles. The chain is Glutathione S-transferase theta-1 (GSTT1) from Gallus gallus (Chicken).